Here is a 560-residue protein sequence, read N- to C-terminus: Arginine--tRNA ligase (560 aa).

The 'HIGH' region signature appears at 122-132; the sequence is ANPNGPLHIGH.

This sequence belongs to the class-I aminoacyl-tRNA synthetase family.

Its subcellular location is the cytoplasm. It catalyses the reaction tRNA(Arg) + L-arginine + ATP = L-arginyl-tRNA(Arg) + AMP + diphosphate. This chain is Arginine--tRNA ligase (argS), found in Methanothermobacter thermautotrophicus (strain ATCC 29096 / DSM 1053 / JCM 10044 / NBRC 100330 / Delta H) (Methanobacterium thermoautotrophicum).